Consider the following 164-residue polypeptide: Vasopressin-neurophysin 2-copeptin (164 aa).

The signal sequence occupies residues 1 to 19 (MPDTMLPACFLGLLAFSSA). Cysteines 20 and 25 form a disulfide. At Gly-28 the chain carries Glycine amide. 7 disulfides stabilise this stretch: Cys-41–Cys-85, Cys-44–Cys-58, Cys-52–Cys-75, Cys-59–Cys-65, Cys-92–Cys-104, Cys-98–Cys-116, and Cys-105–Cys-110. A glycan (N-linked (GlcNAc...) asparagine) is linked at Asn-131.

It belongs to the vasopressin/oxytocin family. As to quaternary structure, interacts with vasopressin receptors V1bR/AVPR1B (Ki=85 pM), V1aR/AVPR1A (Ki=0.6 nM) and V2R/AVPR2 (Ki=4.9 nM). Interacts with oxytocin receptor (OXTR) (Ki=110 nM). In terms of assembly, (Microbial infection) May interact with SARS coronavirus-2/SARS-CoV-2; they may form a complex with secreted ACE2.

Its subcellular location is the secreted. Specifically binds vasopressin. In terms of biological role, has a direct antidiuretic action on the kidney, it also causes vasoconstriction of the peripheral vessels. Acts by binding to vasopressin receptors (V1bR/AVPR1B, V1aR/AVPR1A, and V2R/AVPR2). This chain is Vasopressin-neurophysin 2-copeptin (AVP), found in Homo sapiens (Human).